A 243-amino-acid polypeptide reads, in one-letter code: Phosphate-specific transport system accessory protein PhoU (243 aa).

It belongs to the PhoU family. As to quaternary structure, homodimer. Interacts with phosphate regulon transcriptional regulatory protein PhoB and ferric uptake regulation protein Fur.

The protein localises to the cytoplasm. Part of the phosphate (Pho) regulon, which plays a key role in phosphate homeostasis. Encoded together with proteins of the phosphate-specific transport (Pst) system in the polycistronic pstSCAB-phoU operon. PhoU is essential for the repression of the Pho regulon at high phosphate conditions. In this role, it may bind, possibly as a chaperone, to PhoR, PhoB or a PhoR-PhoB complex to promote dephosphorylation of phospho-PhoB, or inhibit formation of the PhoR-PhoB transitory complex. This chain is Phosphate-specific transport system accessory protein PhoU, found in Edwardsiella tarda.